Here is a 203-residue protein sequence, read N- to C-terminus: Pyridoxine/pyridoxamine 5'-phosphate oxidase (203 aa).

Residues 51–56, 66–67, Arg-72, Lys-73, and Gln-95 contribute to the FMN site; these read RMVLLK and YT. Lys-56 serves as a coordination point for substrate. Tyr-113, Arg-117, and Ser-121 together coordinate substrate. FMN contacts are provided by residues 130-131 and Trp-175; that span reads QS. A substrate-binding site is contributed by 181–183; sequence RLH. Arg-185 contacts FMN.

This sequence belongs to the pyridoxamine 5'-phosphate oxidase family. As to quaternary structure, homodimer. The cofactor is FMN.

It catalyses the reaction pyridoxamine 5'-phosphate + O2 + H2O = pyridoxal 5'-phosphate + H2O2 + NH4(+). The enzyme catalyses pyridoxine 5'-phosphate + O2 = pyridoxal 5'-phosphate + H2O2. Its pathway is cofactor metabolism; pyridoxal 5'-phosphate salvage; pyridoxal 5'-phosphate from pyridoxamine 5'-phosphate: step 1/1. The protein operates within cofactor metabolism; pyridoxal 5'-phosphate salvage; pyridoxal 5'-phosphate from pyridoxine 5'-phosphate: step 1/1. In terms of biological role, catalyzes the oxidation of either pyridoxine 5'-phosphate (PNP) or pyridoxamine 5'-phosphate (PMP) into pyridoxal 5'-phosphate (PLP). This Novosphingobium aromaticivorans (strain ATCC 700278 / DSM 12444 / CCUG 56034 / CIP 105152 / NBRC 16084 / F199) protein is Pyridoxine/pyridoxamine 5'-phosphate oxidase.